We begin with the raw amino-acid sequence, 114 residues long: Putative neurotoxin 7 (114 aa).

This sequence belongs to the scolopendra neurotoxin 8 family. Contains 3 disulfide bonds. In terms of tissue distribution, expressed by the venom gland.

The protein localises to the secreted. The chain is Putative neurotoxin 7 from Scolopendra mutilans (Chinese red-headed centipede).